A 92-amino-acid chain; its full sequence is RNA-binding protein Hfq (92 aa).

The region spanning D9–V68 is the Sm domain. A disordered region spans residues G73–Q92.

This sequence belongs to the Hfq family. Homohexamer.

Its function is as follows. RNA chaperone that binds small regulatory RNA (sRNAs) and mRNAs to facilitate mRNA translational regulation in response to envelope stress, environmental stress and changes in metabolite concentrations. Also binds with high specificity to tRNAs. The sequence is that of RNA-binding protein Hfq from Xanthomonas axonopodis pv. citri (strain 306).